The sequence spans 538 residues: Transposon Tn7 transposition protein TnsE (538 aa).

The segment at residues 311-330 (RVIEAEPTWISFSRPSRIEK) is a DNA-binding region (H-T-H motif). Residues 330-360 (KSRRARKSSQTILEKEEATTSENSNLVSTDE) form a disordered region.

In terms of biological role, tnsABC + TnsD promote high-frequency insertion of Tn7 into a specific target site known as att-Tn7 whereas TnsABC + TnsE promote low-frequency insertion into many different sites. The protein is Transposon Tn7 transposition protein TnsE (tnsE) of Escherichia coli.